The following is a 141-amino-acid chain: Large ribosomal subunit protein uL11 (141 aa).

This sequence belongs to the universal ribosomal protein uL11 family. In terms of assembly, part of the ribosomal stalk of the 50S ribosomal subunit. Interacts with L10 and the large rRNA to form the base of the stalk. L10 forms an elongated spine to which L12 dimers bind in a sequential fashion forming a multimeric L10(L12)X complex. One or more lysine residues are methylated.

Forms part of the ribosomal stalk which helps the ribosome interact with GTP-bound translation factors. The chain is Large ribosomal subunit protein uL11 from Exiguobacterium sp. (strain ATCC BAA-1283 / AT1b).